The following is a 188-amino-acid chain: F-box only protein 36 (188 aa).

The region spanning 91 to 137 (FDFLERLSDDLLLTIISYLDLEDIARLCQTSHRFAKLCMSDKLWEQI) is the F-box domain.

As to quaternary structure, directly interacts with SKP1 and CUL1.

Functionally, substrate-recognition component of the SCF (SKP1-CUL1-F-box protein)-type E3 ubiquitin ligase complex. The protein is F-box only protein 36 (FBXO36) of Homo sapiens (Human).